Reading from the N-terminus, the 153-residue chain is Ribonuclease H (153 aa).

The region spanning 1–141 (MKHIEIYTDG…CDVLARDAAS (141 aa)) is the RNase H type-1 domain. Mg(2+)-binding residues include Asp-9, Glu-47, Asp-69, and Asp-133.

Belongs to the RNase H family. Monomer. The cofactor is Mg(2+).

It is found in the cytoplasm. The enzyme catalyses Endonucleolytic cleavage to 5'-phosphomonoester.. Its function is as follows. Endonuclease that specifically degrades the RNA of RNA-DNA hybrids. This chain is Ribonuclease H, found in Pseudoalteromonas atlantica (strain T6c / ATCC BAA-1087).